The primary structure comprises 105 residues: Prokineticin-1 (105 aa).

The first 19 residues, 1 to 19 (MRGAVQVFIMLLLATVSDC), serve as a signal peptide directing secretion. Disulfide bonds link Cys-26-Cys-38, Cys-32-Cys-50, Cys-37-Cys-78, Cys-60-Cys-86, and Cys-80-Cys-96.

It belongs to the AVIT (prokineticin) family.

It localises to the secreted. In terms of biological role, potently contracts gastrointestinal (GI) smooth muscle. Induces proliferation, migration and fenestration (the formation of membrane discontinuities) in capillary endothelial cells derived from endocrine glands. Has little or no effect on a variety of other endothelial and non-endothelial cell types. Induces proliferation and differentiation, but not migration, of enteric neural crest cells. Directly influences neuroblastoma progression by promoting the proliferation and migration of neuroblastoma cells. Positively regulates PTGS2 expression and prostaglandin synthesis. May play a role in placentation. May play a role in normal and pathological testis angiogenesis. The protein is Prokineticin-1 (Prok1) of Rattus norvegicus (Rat).